A 116-amino-acid chain; its full sequence is UPF0102 protein Sala_0262 (116 aa).

Belongs to the UPF0102 family.

The protein is UPF0102 protein Sala_0262 of Sphingopyxis alaskensis (strain DSM 13593 / LMG 18877 / RB2256) (Sphingomonas alaskensis).